A 629-amino-acid polypeptide reads, in one-letter code: tRNA uridine 5-carboxymethylaminomethyl modification enzyme MnmG (629 aa).

Residue 13-18 participates in FAD binding; sequence GGGHAG. 273-287 is a binding site for NAD(+); the sequence is GPRYCPSIEDKINRF.

It belongs to the MnmG family. As to quaternary structure, homodimer. Heterotetramer of two MnmE and two MnmG subunits. The cofactor is FAD.

The protein localises to the cytoplasm. Functionally, NAD-binding protein involved in the addition of a carboxymethylaminomethyl (cmnm) group at the wobble position (U34) of certain tRNAs, forming tRNA-cmnm(5)s(2)U34. This is tRNA uridine 5-carboxymethylaminomethyl modification enzyme MnmG from Shewanella piezotolerans (strain WP3 / JCM 13877).